Consider the following 424-residue polypeptide: tRNA(Met) cytidine acetate ligase (424 aa).

ATP is bound by residues I7 to H20, G102, N174, and R199.

Belongs to the TmcAL family.

It localises to the cytoplasm. It catalyses the reaction cytidine(34) in elongator tRNA(Met) + acetate + ATP = N(4)-acetylcytidine(34) in elongator tRNA(Met) + AMP + diphosphate. Functionally, catalyzes the formation of N(4)-acetylcytidine (ac(4)C) at the wobble position of elongator tRNA(Met), using acetate and ATP as substrates. First activates an acetate ion to form acetyladenylate (Ac-AMP) and then transfers the acetyl group to tRNA to form ac(4)C34. This Alkaliphilus metalliredigens (strain QYMF) protein is tRNA(Met) cytidine acetate ligase.